A 316-amino-acid chain; its full sequence is Ribosomal RNA small subunit methyltransferase H (316 aa).

S-adenosyl-L-methionine contacts are provided by residues 35–37 (AGH), D55, F84, D105, and Q112.

The protein belongs to the methyltransferase superfamily. RsmH family.

Its subcellular location is the cytoplasm. It catalyses the reaction cytidine(1402) in 16S rRNA + S-adenosyl-L-methionine = N(4)-methylcytidine(1402) in 16S rRNA + S-adenosyl-L-homocysteine + H(+). Its function is as follows. Specifically methylates the N4 position of cytidine in position 1402 (C1402) of 16S rRNA. The polypeptide is Ribosomal RNA small subunit methyltransferase H (Streptococcus pneumoniae (strain P1031)).